The primary structure comprises 240 residues: Uridylate kinase (240 aa).

12–15 (KLSG) lines the ATP pocket. Positions 20–25 (GEQGFG) are involved in allosteric activation by GTP. Glycine 54 is a UMP binding site. ATP-binding residues include glycine 55 and arginine 59. UMP-binding positions include aspartate 74 and 135–142 (TGNPYFST). ATP-binding residues include asparagine 163, tyrosine 169, and aspartate 172.

It belongs to the UMP kinase family. Homohexamer.

Its subcellular location is the cytoplasm. The catalysed reaction is UMP + ATP = UDP + ADP. It participates in pyrimidine metabolism; CTP biosynthesis via de novo pathway; UDP from UMP (UMPK route): step 1/1. Its activity is regulated as follows. Allosterically activated by GTP. Inhibited by UTP. Functionally, catalyzes the reversible phosphorylation of UMP to UDP. The sequence is that of Uridylate kinase from Bacillus cereus (strain ATCC 14579 / DSM 31 / CCUG 7414 / JCM 2152 / NBRC 15305 / NCIMB 9373 / NCTC 2599 / NRRL B-3711).